The primary structure comprises 509 residues: 4-aminobutyrate aminotransferase (509 aa).

166-167 (GS) serves as a coordination point for pyridoxal 5'-phosphate. Arginine 223 contributes to the substrate binding site. Lysine 363 bears the N6-(pyridoxal phosphate)lysine mark. Threonine 387 contacts pyridoxal 5'-phosphate.

The protein belongs to the class-III pyridoxal-phosphate-dependent aminotransferase family. Homodimer. Pyridoxal 5'-phosphate serves as cofactor.

The protein localises to the cytoplasm. It carries out the reaction 4-aminobutanoate + 2-oxoglutarate = succinate semialdehyde + L-glutamate. Deaminates gamma-aminobutyric acid (GABA) to succinate-semialdehyde, which in turn is converted to succinate by the succinate semialdehyde dehydrogenase. Not required for the utilization of GABA as nitrogen source. This is 4-aminobutyrate aminotransferase (GATA) from Mycosarcoma maydis (Corn smut fungus).